Reading from the N-terminus, the 258-residue chain is Imidazole glycerol phosphate synthase subunit HisF (258 aa).

Active-site residues include D11 and D130.

This sequence belongs to the HisA/HisF family. As to quaternary structure, heterodimer of HisH and HisF.

Its subcellular location is the cytoplasm. It catalyses the reaction 5-[(5-phospho-1-deoxy-D-ribulos-1-ylimino)methylamino]-1-(5-phospho-beta-D-ribosyl)imidazole-4-carboxamide + L-glutamine = D-erythro-1-(imidazol-4-yl)glycerol 3-phosphate + 5-amino-1-(5-phospho-beta-D-ribosyl)imidazole-4-carboxamide + L-glutamate + H(+). It functions in the pathway amino-acid biosynthesis; L-histidine biosynthesis; L-histidine from 5-phospho-alpha-D-ribose 1-diphosphate: step 5/9. In terms of biological role, IGPS catalyzes the conversion of PRFAR and glutamine to IGP, AICAR and glutamate. The HisF subunit catalyzes the cyclization activity that produces IGP and AICAR from PRFAR using the ammonia provided by the HisH subunit. This chain is Imidazole glycerol phosphate synthase subunit HisF, found in Shigella flexneri serotype 5b (strain 8401).